The primary structure comprises 565 residues: Alkaline nuclease (565 aa).

Belongs to the herpesviridae alkaline nuclease family. In terms of assembly, interacts with major DNA-binding protein; this interaction increases the nuclease processivity of the alkaline exonuclease.

The protein resides in the host nucleus. Its subcellular location is the host cytoplasm. In terms of biological role, plays a role in processing non linear or branched viral DNA intermediates in order to promote the production of mature packaged unit-length linear progeny viral DNA molecules. Exhibits endonuclease and exonuclease activities and accepts both double-stranded and single-stranded DNA as substrate. Exonuclease digestion of DNA is in the 5'-&gt; 3' direction and the products are 5'-monophosphate nucleosides. Additionally, forms a recombinase with the major DNA-binding protein, which displays strand exchange activity. This chain is Alkaline nuclease, found in Equus caballus (Horse).